The following is a 443-amino-acid chain: Protein UIP5 (443 aa).

The signal sequence occupies residues 1-27 (MSRDVRAEKLAISLLILSLFLIFQLVA). The Perinuclear space portion of the chain corresponds to 28–398 (EIYLNNGDQY…LFKVVLTIWH (371 aa)). Residues 399–420 (YSEILLLIMGIYLFSACIRVFQ) traverse the membrane as a helical segment. Residues 421 to 443 (RRFKKIRSRRKRAGSHSVGLLPM) lie on the Cytoplasmic side of the membrane.

The protein localises to the nucleus membrane. This Saccharomyces cerevisiae (strain ATCC 204508 / S288c) (Baker's yeast) protein is Protein UIP5 (UIP5).